We begin with the raw amino-acid sequence, 33 residues long: Mu-theraphotoxin-Osp1a (33 aa).

3 disulfides stabilise this stretch: Cys-2/Cys-17, Cys-9/Cys-22, and Cys-16/Cys-29.

Belongs to the neurotoxin 10 (Hwtx-1) family. As to expression, expressed by the venom gland.

The protein resides in the secreted. Its function is as follows. Voltage-gated sodium channel Nav1.7/SCN9A inhibitor. The polypeptide is Mu-theraphotoxin-Osp1a (Orphnaecus sp. (strain Sibaliw/Philippines) (Tarantula spider)).